Reading from the N-terminus, the 100-residue chain is Replication restart protein PriB (100 aa).

The 100-residue stretch at 1-100 (MTNRMELSGT…VLHADNITQI (100 aa)) folds into the SSB domain.

This sequence belongs to the PriB family. As to quaternary structure, homodimer. Interacts with PriA and DnaT. Component of the replication restart primosome. Primosome assembly occurs via a 'hand-off' mechanism. PriA binds to replication forks, subsequently PriB then DnaT bind; DnaT then displaces ssDNA to generate the helicase loading substrate.

Functionally, involved in the restart of stalled replication forks, which reloads the replicative helicase on sites other than the origin of replication; the PriA-PriB pathway is the major replication restart pathway. During primosome assembly it facilitates complex formation between PriA and DnaT on DNA; stabilizes PriA on DNA. Stimulates the DNA unwinding activity of PriA helicase. In Vibrio parahaemolyticus serotype O3:K6 (strain RIMD 2210633), this protein is Replication restart protein PriB.